The chain runs to 104 residues: Large ribosomal subunit protein uL24 (104 aa).

Belongs to the universal ribosomal protein uL24 family. In terms of assembly, part of the 50S ribosomal subunit.

In terms of biological role, one of two assembly initiator proteins, it binds directly to the 5'-end of the 23S rRNA, where it nucleates assembly of the 50S subunit. One of the proteins that surrounds the polypeptide exit tunnel on the outside of the subunit. In Clostridium beijerinckii (strain ATCC 51743 / NCIMB 8052) (Clostridium acetobutylicum), this protein is Large ribosomal subunit protein uL24.